A 340-amino-acid chain; its full sequence is MQGLNPFHRDQGAGGRPAPVRPAPARPAPVAPRTPRKDPAPSRLAYRLNRMMLRPLVRRLVHVGLPAFLAALVAGIWLSDDTRRANLTGGIDAIVDRIQHRDEFMVKMMTIEGASPVVDKGLRAMLPVELPASSFEIDLEKLRERVLKLDAVETVDLRIKPGGVLSAVVTERVPVVLWRHARGIELLDKTGHRVASVTSREVRGDLPIIAGEGADRAAPEALALIDAAGPILPRLRGLERMGERRWDVVLDHGQRIKLPEDKALQALERAIALNGALHMLDRDISVVDLRQEARPVVRLGLEAQNAIRQARGQPELGPDGTPLAPEATAGNAAKAKKKSG.

The segment at 1–41 is disordered; that stretch reads MQGLNPFHRDQGAGGRPAPVRPAPARPAPVAPRTPRKDPAP. Over 1-55 the chain is Cytoplasmic; the sequence is MQGLNPFHRDQGAGGRPAPVRPAPARPAPVAPRTPRKDPAPSRLAYRLNRMMLRP. Positions 19 to 32 are enriched in pro residues; it reads PVRPAPARPAPVAP. The helical transmembrane segment at 56–78 threads the bilayer; the sequence is LVRRLVHVGLPAFLAALVAGIWL. Topologically, residues 79-340 are periplasmic; it reads SDDTRRANLT…NAAKAKKKSG (262 aa). The POTRA domain occupies 104-172; it reads FMVKMMTIEG…GVLSAVVTER (69 aa). A disordered region spans residues 308–340; it reads RQARGQPELGPDGTPLAPEATAGNAAKAKKKSG. Over residues 324–333 the composition is skewed to low complexity; sequence APEATAGNAA.

It belongs to the FtsQ/DivIB family. FtsQ subfamily.

Its subcellular location is the cell inner membrane. Functionally, essential cell division protein. The protein is Cell division protein FtsQ of Paracoccus denitrificans (strain Pd 1222).